A 568-amino-acid polypeptide reads, in one-letter code: Oxygen-dependent choline dehydrogenase (568 aa).

6-35 provides a ligand contact to FAD; that stretch reads DYIIVGAGSAGCVLADRLSASGEHYILLLE. His-470 acts as the Proton acceptor in catalysis.

It belongs to the GMC oxidoreductase family. FAD serves as cofactor.

The catalysed reaction is choline + A = betaine aldehyde + AH2. The enzyme catalyses betaine aldehyde + NAD(+) + H2O = glycine betaine + NADH + 2 H(+). The protein operates within amine and polyamine biosynthesis; betaine biosynthesis via choline pathway; betaine aldehyde from choline (cytochrome c reductase route): step 1/1. In terms of biological role, involved in the biosynthesis of the osmoprotectant glycine betaine. Catalyzes the oxidation of choline to betaine aldehyde and betaine aldehyde to glycine betaine at the same rate. The sequence is that of Oxygen-dependent choline dehydrogenase from Photobacterium profundum (strain SS9).